The primary structure comprises 260 residues: Late transcription factor 1 (260 aa).

It belongs to the chordopoxvirinae VLTF-1 family. Interacts with the late transcription factors VLTF-2 and VLTF-3. Interacts with the late transcription elongation factor VLTF-4. Interacts with itself.

Its function is as follows. Associates with RNA polymerase to initiate transcription from late gene promoters. This Homo sapiens (Human) protein is Late transcription factor 1 (OPG093).